Consider the following 171-residue polypeptide: tRNA-splicing endonuclease (171 aa).

Catalysis depends on residues tyrosine 110, histidine 117, and lysine 148.

Belongs to the tRNA-intron endonuclease family. Archaeal short subfamily. In terms of assembly, homotetramer; although the tetramer contains four active sites, only two participate in the cleavage. Therefore, it should be considered as a dimer of dimers.

The enzyme catalyses pretRNA = a 3'-half-tRNA molecule with a 5'-OH end + a 5'-half-tRNA molecule with a 2',3'-cyclic phosphate end + an intron with a 2',3'-cyclic phosphate and a 5'-hydroxyl terminus.. Functionally, endonuclease that removes tRNA introns. Cleaves pre-tRNA at the 5'- and 3'-splice sites to release the intron. The products are an intron and two tRNA half-molecules bearing 2',3' cyclic phosphate and 5'-OH termini. Recognizes a pseudosymmetric substrate in which 2 bulged loops of 3 bases are separated by a stem of 4 bp. The chain is tRNA-splicing endonuclease from Thermococcus onnurineus (strain NA1).